Reading from the N-terminus, the 394-residue chain is Na(+)/H(+) antiporter NhaA 2 (394 aa).

11 helical membrane-spanning segments follow: residues 13 to 33 (FGGVLLIIATILALLFQNGFL), 58 to 78 (LILWVNDGLMAIFFFVVGLEL), 93 to 113 (IALPTIGALGGVILPAVIFWA), 124 to 144 (GWAIPTATDIAFALGVLMLLG), 153 to 173 (IFLLTLAIIDDLCAIVIIAIF), 176 to 196 (TKLSFISFVIAGICLFALWVL), 208 to 228 (ILVTLILWVSVLKSGVHATIA), 260 to 280 (YFILPVFAFVNAGVSLAGVQI), 291 to 311 (IFFGLLIGKQVGVFLFSYIFI), 327 to 347 (FYGVCILTGIGFTMSLFVNSL), and 361 to 381 (LGILLASFTAGVIGYIYLLVF).

The protein belongs to the NhaA Na(+)/H(+) (TC 2.A.33) antiporter family.

It localises to the cell inner membrane. It carries out the reaction Na(+)(in) + 2 H(+)(out) = Na(+)(out) + 2 H(+)(in). In terms of biological role, na(+)/H(+) antiporter that extrudes sodium in exchange for external protons. The chain is Na(+)/H(+) antiporter NhaA 2 from Campylobacter fetus subsp. fetus (strain 82-40).